A 178-amino-acid chain; its full sequence is Nicotinamide-nucleotide adenylyltransferase (178 aa).

Belongs to the archaeal NMN adenylyltransferase family.

It localises to the cytoplasm. The enzyme catalyses beta-nicotinamide D-ribonucleotide + ATP + H(+) = diphosphate + NAD(+). Its pathway is cofactor biosynthesis; NAD(+) biosynthesis; NAD(+) from nicotinamide D-ribonucleotide: step 1/1. In Pyrobaculum aerophilum (strain ATCC 51768 / DSM 7523 / JCM 9630 / CIP 104966 / NBRC 100827 / IM2), this protein is Nicotinamide-nucleotide adenylyltransferase.